The primary structure comprises 498 residues: Peptidase inhibitor 16 (498 aa).

Positions 1–29 (MHGSCSPWVMLPPPLLLLLLLIATGPTTA) are cleaved as a signal peptide. Residues 39-167 (VDLHNQYRAQ…ANIHLLVCNY (129 aa)) form the SCP domain. An N-linked (GlcNAc...) asparagine glycan is attached at asparagine 116. Disordered regions lie at residues 204–277 (NPEK…GPSS), 317–407 (PKSM…SPLS), and 419–467 (ERGG…ENPE). Polar residues-rich tracts occupy residues 218–277 (VPST…GPSS) and 344–353 (LTESGESVPQ). Low complexity predominate over residues 367–380 (PEAILPEAEAAPTE). Over residues 383–397 (VELREPEAESPKAES) the composition is skewed to basic and acidic residues. Over residues 437–447 (SLPTFPSASGN) the composition is skewed to polar residues. Asparagine 447 carries an N-linked (GlcNAc...) asparagine glycan.

It belongs to the CRISP family. Interacts with PSP94/MSMB. In terms of processing, N-glycosylated. In terms of tissue distribution, expressed strongly in aorta and skin, and weakly in adipose tissue (at protein level). In heart, found in the extracellular space surrounding cardiomyocytes (at protein level).

It localises to the secreted. In terms of biological role, may inhibit cardiomyocyte growth. The polypeptide is Peptidase inhibitor 16 (Pi16) (Mus musculus (Mouse)).